The chain runs to 350 residues: Ribosomal RNA large subunit methyltransferase Cfr (350 aa).

E92 acts as the Proton acceptor in catalysis. In terms of domain architecture, Radical SAM core spans 99-333 (EAGWESFCIS…VTIRSQFGRE (235 aa)). C106 and C338 are disulfide-bonded. [4Fe-4S] cluster is bound by residues C113, C117, and C120. S-adenosyl-L-methionine-binding positions include 159-160 (GE), S190, 213-215 (SLH), and N293. The active-site S-methylcysteine intermediate is the C338.

Belongs to the radical SAM superfamily. RlmN family. Cfr subfamily. The cofactor is [4Fe-4S] cluster.

The protein localises to the cytoplasm. The catalysed reaction is adenosine(2503) in 23S rRNA + 2 reduced [2Fe-2S]-[ferredoxin] + 2 S-adenosyl-L-methionine = 8-methyladenosine(2503) in 23S rRNA + 5'-deoxyadenosine + L-methionine + 2 oxidized [2Fe-2S]-[ferredoxin] + S-adenosyl-L-homocysteine. Its function is as follows. Specifically methylates position 8 of adenine 2503 in 23S rRNA. Confers resistance to some classes of antibiotics. The polypeptide is Ribosomal RNA large subunit methyltransferase Cfr (Shouchella clausii (strain KSM-K16) (Alkalihalobacillus clausii)).